Here is a 725-residue protein sequence, read N- to C-terminus: Glutamine-dependent NAD(+) synthetase (725 aa).

The CN hydrolase domain occupies 5–275 (VTVATCALNQ…VEVLTATLDL (271 aa)). The active-site Proton acceptor; for glutaminase activity is Glu-45. Lys-114 acts as the For glutaminase activity in catalysis. Cys-175 (nucleophile; for glutaminase activity) is an active-site residue. Positions 325–706 (YHRPEEEISL…KASQTREEQV (382 aa)) are ligase. Position 355-362 (355-362 (PLSGGVDS)) interacts with ATP. Residue Ser-357 is part of the active site.

This sequence in the C-terminal section; belongs to the NAD synthetase family. As to quaternary structure, homohexamer. As to expression, highly expressed in small intestine, kidney, liver and testis. Weakly expressed in skeletal muscle, spleen, lung, heart and brain.

It carries out the reaction deamido-NAD(+) + L-glutamine + ATP + H2O = L-glutamate + AMP + diphosphate + NAD(+) + H(+). It functions in the pathway cofactor biosynthesis; NAD(+) biosynthesis; NAD(+) from deamido-NAD(+) (L-Gln route): step 1/1. Catalyzes the final step of the nicotinamide adenine dinucleotide (NAD) de novo synthesis pathway, the ATP-dependent amidation of deamido-NAD using L-glutamine as a nitrogen source. The polypeptide is Glutamine-dependent NAD(+) synthetase (Nadsyn1) (Mus musculus (Mouse)).